The primary structure comprises 93 residues: MTQSSNVKTFDALFAELSERARTRPAGSGTVAALDGGVHGIGKKILEEAGEVWLAAEHESDDALAEEISQLLYWTQVLMLARGLSLDDVYGKL.

It belongs to the PRA-PH family.

The protein localises to the cytoplasm. It catalyses the reaction 1-(5-phospho-beta-D-ribosyl)-ATP + H2O = 1-(5-phospho-beta-D-ribosyl)-5'-AMP + diphosphate + H(+). It participates in amino-acid biosynthesis; L-histidine biosynthesis; L-histidine from 5-phospho-alpha-D-ribose 1-diphosphate: step 2/9. This chain is Phosphoribosyl-ATP pyrophosphatase, found in Mycolicibacterium gilvum (strain PYR-GCK) (Mycobacterium gilvum (strain PYR-GCK)).